The following is a 105-amino-acid chain: Fe-S protein maturation auxiliary factor PG_1777 (105 aa).

This sequence belongs to the Fe-S cluster assembly domain superfamily. MIP18-like family. In terms of assembly, putative homodimer; may be disulfide-linked.

Functionally, iron binding protein that protects DNA from Fenton chemistry-mediated damage caused by hydrogen peroxide induced oxidative stress. May be involved in iron-sulfur cluster assembly. This chain is Fe-S protein maturation auxiliary factor PG_1777, found in Porphyromonas gingivalis (strain ATCC BAA-308 / W83).